The primary structure comprises 212 residues: Putative tyrosine-protein phosphatase R622 (212 aa).

In terms of domain architecture, Tyrosine-protein phosphatase spans 9 to 191; sequence KISQVTNNIF…LQGYQSKKEN (183 aa). Cys-135 (phosphocysteine intermediate) is an active-site residue.

It belongs to the protein-tyrosine phosphatase family. Non-receptor class dual specificity subfamily.

The catalysed reaction is O-phospho-L-tyrosyl-[protein] + H2O = L-tyrosyl-[protein] + phosphate. This Acanthamoeba polyphaga mimivirus (APMV) protein is Putative tyrosine-protein phosphatase R622.